The primary structure comprises 910 residues: Periodic tryptophan protein 2 homolog (910 aa).

WD repeat units follow at residues 12-50 (GTVY…SKTL), 53-92 (DCNY…KIYT), 94-134 (RSNK…KVYN), 144-183 (LSSD…NLFI), 188-227 (SHKG…GELV), 271-310 (GKSV…LVHN), 313-355 (VSEM…YVMK), 358-397 (AHSL…CTVT), 400-439 (EHTS…NFRT), 443-485 (PEPT…DILS), 486-523 (GHES…AETV), 525-563 (VSHE…NLGS), 586-625 (AKTK…ILKK), and 688-728 (RPEV…DPFQ). Positions 867–910 (SKKSVKKEEEEEEDVSDESDDEDIEDESAGSDDEDSDDSVEIIE) are disordered. The segment covering 875 to 910 (EEEEEDVSDESDDEDIEDESAGSDDEDSDDSVEIIE) has biased composition (acidic residues).

The protein belongs to the WD repeat PWP2 family.

This chain is Periodic tryptophan protein 2 homolog, found in Caenorhabditis elegans.